A 496-amino-acid chain; its full sequence is Angiopoietin-2 (496 aa).

Residues 1 to 18 (MWQIVFLTFGCDLVLASA) form the signal peptide. Residues asparagine 89, asparagine 119, asparagine 133, asparagine 151, asparagine 240, and asparagine 304 are each glycosylated (N-linked (GlcNAc...) asparagine). Positions 159–256 (QLLQHSISTN…QQHDLMETVN (98 aa)) form a coiled coil. In terms of domain architecture, Fibrinogen C-terminal spans 280–496 (TFRDCAEIFK…TTMMIRPADF (217 aa)). A disulfide bridge links cysteine 284 with cysteine 313. Aspartate 429, aspartate 431, cysteine 433, and cysteine 435 together coordinate Ca(2+). Cystine bridges form between cysteine 433/cysteine 435 and cysteine 437/cysteine 450.

In terms of assembly, interacts with TEK/TIE2, competing for the same binding site as ANGPT1. Interacts with ITGA5. Interacts with SVEP1/polydom. Interacts with THBD; this interaction significantly inhibits the generation of activated PC and TAFIa/CPB2 by the thrombin/thrombomodulin complex.

Its subcellular location is the secreted. Its function is as follows. Binds to TEK/TIE2, competing for the ANGPT1 binding site, and modulating ANGPT1 signaling. Can induce tyrosine phosphorylation of TEK/TIE2 in the absence of ANGPT1. In the absence of angiogenic inducers, such as VEGF, ANGPT2-mediated loosening of cell-matrix contacts may induce endothelial cell apoptosis with consequent vascular regression. In concert with VEGF, it may facilitate endothelial cell migration and proliferation, thus serving as a permissive angiogenic signal. Involved in the regulation of lymphangiogenesis. The sequence is that of Angiopoietin-2 (Angpt2) from Rattus norvegicus (Rat).